The following is a 994-amino-acid chain: Translocase of chloroplast 108, chloroplastic (994 aa).

3 disordered regions span residues 14 to 61, 84 to 124, and 152 to 287; these read KEAS…EDEP, TTDL…DPSV, and AVDG…DETR. Polar residues-rich tracts occupy residues 37 to 53 and 84 to 98; these read GETT…ANES and TTDL…TPSN. Residues 99–121 show a composition bias toward basic and acidic residues; it reads AEKESPEATEVRIVEEGKLEKAD. Residues 166–197 are compositionally biased toward acidic residues; it reads NDGDTDANTADEDNENDEDDVDEDEDEDDADM. The segment covering 249-268 has biased composition (polar residues); it reads ASDSPGRNTQRPNGALSTQI. Residues 269–280 are compositionally biased toward low complexity; that stretch reads TSTTDESASSDA. Positions 360–589 constitute an AIG1-type G domain; the sequence is DFACTILVLG…KLQETTAPGR (230 aa). The G1 stretch occupies residues 369–376; it reads GKTGVGKS. GTP is bound at residue 372 to 377; the sequence is GVGKSS. Residue Ser376 participates in Mg(2+) binding. The tract at residues 395-399 is G2; that stretch reads PSTNK. The G3 stretch occupies residues 416 to 419; the sequence is DTPG. The segment at 488-491 is G4; that stretch reads THAS. GTP is bound by residues His489 and 537–538; that span reads EN. The G5 stretch occupies residues 537–539; the sequence is ENH. 2 disordered regions span residues 616 to 659 and 691 to 716; these read LPDE…EDLT and EAKK…EAGN. A compositionally biased stretch (acidic residues) spans 620–643; it reads QAGESDESDDDEEEEDSDADDYDE. The segment covering 650–659 has biased composition (basic and acidic residues); it reads LSKEELEDLT. Residues 705-714 are compositionally biased toward acidic residues; it reads AEAEEAEDEA. The helical transmembrane segment at 969-989 threads the bilayer; that stretch reads MVLIGIVPILRSLINCRFGFG.

This sequence belongs to the TRAFAC class TrmE-Era-EngA-EngB-Septin-like GTPase superfamily. AIG1/Toc34/Toc159-like paraseptin GTPase family. TOC159 subfamily. As to quaternary structure, part of the TOC core complex. Mg(2+) serves as cofactor.

The protein resides in the plastid. It is found in the chloroplast outer membrane. Its function is as follows. GTPase involved in protein precursor import into chloroplasts. Seems to recognize chloroplast-destined precursor proteins and regulate their presentation to the translocation channel through GTP hydrolysis. Probably specialized in the import of nuclear encoded non-photosynthetic preproteins from the cytoplasm to the chloroplast. The polypeptide is Translocase of chloroplast 108, chloroplastic (Physcomitrium patens (Spreading-leaved earth moss)).